An 893-amino-acid polypeptide reads, in one-letter code: Pentatricopeptide repeat-containing protein At5g52850, chloroplastic (893 aa).

19 PPR repeats span residues 57–87 (NLDL…MSHR), 88–122 (TVFA…GTHP), 123–157 (NEFT…GFEG), 158–188 (NSVV…LQNA), 189–223 (DTIS…GVPP), 224–257 (NEFT…GIPL), 258–288 (NVVL…SGEQ), 289–323 (DVFL…GLQP), 324–358 (NNFT…GFED), 359–390 (STDV…MVSP), 391–425 (NVVS…EVEP), 426–460 (NVVT…HVDG), 461–491 (EMVV…MKRR), 492–526 (DNIT…GIRM), 527–561 (DQLS…GFSG), 562–592 (AASV…IATP), 593–627 (DVVS…ETEP), 628–658 (DSVT…MKKI), and 664–694 (QVEH…MHLK). The segment at 699–774 (IFKTLLRACR…KLGKSTVEVQ (76 aa)) is type E motif. The tract at residues 775–806 (GKVHSFVSEDVTRVDKTNGIYAEIESIKEEIK) is type E(+) motif. Residues 807 to 893 (RFGSPYRGNE…SCKREETSFV (87 aa)) form a type DYW motif region.

This sequence belongs to the PPR family. PCMP-H subfamily.

It localises to the plastid. The protein resides in the chloroplast. In Arabidopsis thaliana (Mouse-ear cress), this protein is Pentatricopeptide repeat-containing protein At5g52850, chloroplastic (PCMP-H31).